The chain runs to 384 residues: Farnesyl pyrophosphate synthase 1, mitochondrial (384 aa).

Isopentenyl diphosphate-binding residues include lysine 89, arginine 92, and glutamine 128. Mg(2+) is bound by residues aspartate 135 and aspartate 139. Arginine 144 lines the dimethylallyl diphosphate pocket. Arginine 145 is a binding site for isopentenyl diphosphate. Lysine 232, threonine 233, glutamine 271, lysine 288, and lysine 297 together coordinate dimethylallyl diphosphate.

This sequence belongs to the FPP/GGPP synthase family. Requires Mg(2+) as cofactor. As to expression, the FPS1L mRNA accumulates preferentially in inflorescences, whereas the FPS1S mRNA is predominantly expressed in roots and inflorescences.

It localises to the mitochondrion. The protein resides in the cytoplasm. The enzyme catalyses isopentenyl diphosphate + dimethylallyl diphosphate = (2E)-geranyl diphosphate + diphosphate. The catalysed reaction is isopentenyl diphosphate + (2E)-geranyl diphosphate = (2E,6E)-farnesyl diphosphate + diphosphate. It participates in isoprenoid biosynthesis; farnesyl diphosphate biosynthesis; farnesyl diphosphate from geranyl diphosphate and isopentenyl diphosphate: step 1/1. Its pathway is isoprenoid biosynthesis; geranyl diphosphate biosynthesis; geranyl diphosphate from dimethylallyl diphosphate and isopentenyl diphosphate: step 1/1. In terms of biological role, catalyzes the sequential condensation of isopentenyl pyrophosphate with the allylic pyrophosphates, dimethylallyl pyrophosphate, and then with the resultant geranylpyrophosphate to the ultimate product farnesyl pyrophosphate. The polypeptide is Farnesyl pyrophosphate synthase 1, mitochondrial (FPS1) (Arabidopsis thaliana (Mouse-ear cress)).